The sequence spans 403 residues: Probable tRNA sulfurtransferase (403 aa).

Residues 60 to 165 enclose the THUMP domain; that stretch reads QLVEERLKPI…KEGVFLSCRT (106 aa). ATP is bound by residues 183–184, 208–209, arginine 265, glycine 287, and glutamine 296; these read ML and HF.

Belongs to the ThiI family.

The protein resides in the cytoplasm. It carries out the reaction [ThiI sulfur-carrier protein]-S-sulfanyl-L-cysteine + a uridine in tRNA + 2 reduced [2Fe-2S]-[ferredoxin] + ATP + H(+) = [ThiI sulfur-carrier protein]-L-cysteine + a 4-thiouridine in tRNA + 2 oxidized [2Fe-2S]-[ferredoxin] + AMP + diphosphate. The enzyme catalyses [ThiS sulfur-carrier protein]-C-terminal Gly-Gly-AMP + S-sulfanyl-L-cysteinyl-[cysteine desulfurase] + AH2 = [ThiS sulfur-carrier protein]-C-terminal-Gly-aminoethanethioate + L-cysteinyl-[cysteine desulfurase] + A + AMP + 2 H(+). Its pathway is cofactor biosynthesis; thiamine diphosphate biosynthesis. Its function is as follows. Catalyzes the ATP-dependent transfer of a sulfur to tRNA to produce 4-thiouridine in position 8 of tRNAs, which functions as a near-UV photosensor. Also catalyzes the transfer of sulfur to the sulfur carrier protein ThiS, forming ThiS-thiocarboxylate. This is a step in the synthesis of thiazole, in the thiamine biosynthesis pathway. The sulfur is donated as persulfide by IscS. The sequence is that of Probable tRNA sulfurtransferase from Listeria monocytogenes serotype 4b (strain CLIP80459).